Reading from the N-terminus, the 340-residue chain is MAQKEIINKKNTQKNSSFIESNNLTSFDFFDAKKNSEIETISTGSLNLDEALGSGGLPLGRIVELYGNESSGKTTIALNAVASFQKAGKTACYIDAEGALDLAYAKSIGIDLNKLLIAHPRHGENAFALIESLIKTNKISLIVIDSVAALIPKQELEGTIEEQTIGLHARMMSKGLRRIQSILPDSKTCVLFINQLREKPGVMFGNNEVTTGGKALRFYSSLRMEAKRVELLKDKFNNYVGIKTKVMVSKNKIAKPFGVAILEIMFNRGFVHEHEVIDLALKFNVVVRAGNSYSFNNESIAVGKEKLLNVLSEKPALFEQIKELTVQQLANKNSFQQTAS.

67 to 74 (GNESSGKT) contributes to the ATP binding site.

The protein belongs to the RecA family.

The protein resides in the cytoplasm. Can catalyze the hydrolysis of ATP in the presence of single-stranded DNA, the ATP-dependent uptake of single-stranded DNA by duplex DNA, and the ATP-dependent hybridization of homologous single-stranded DNAs. It interacts with LexA causing its activation and leading to its autocatalytic cleavage. The polypeptide is Protein RecA (Mycoplasma genitalium (strain ATCC 33530 / DSM 19775 / NCTC 10195 / G37) (Mycoplasmoides genitalium)).